The sequence spans 456 residues: Glycosyl hydrolase family 109 protein 2 (456 aa).

The segment at residues Met1–Gly33 is a signal peptide (tat-type signal). Residues Glu63–Arg64, Asp85, Trp134–His137, Glu154–Val155, and Asn183 contribute to the NAD(+) site. Residues Tyr212, Arg231, Tyr243–His246, and Tyr325 each bind substrate. Tyr243 contacts NAD(+).

It belongs to the Gfo/Idh/MocA family. Glycosyl hydrolase 109 subfamily. NAD(+) is required as a cofactor. Predicted to be exported by the Tat system. The position of the signal peptide cleavage has not been experimentally proven.

Functionally, glycosidase. This chain is Glycosyl hydrolase family 109 protein 2, found in Shewanella sp. (strain ANA-3).